Reading from the N-terminus, the 1454-residue chain is Probable cleavage and polyadenylation specificity factor subunit 1 (1454 aa).

The interval Lys736 to Pro765 is disordered.

The protein belongs to the CPSF1 family. In terms of assembly, CPSF is a heterotetramer composed of four distinct subunits 160 (cpsf-1), 100 (cpsf-2), 70 (cpsf-3), and 30 kDa (cpsf-4).

Its subcellular location is the nucleus. In terms of biological role, CPSF plays a key role in pre-mRNA 3'-end formation, recognizing the AAUAAA signal sequence and interacting with poly(A)polymerase and other factors to bring about cleavage and poly(A) addition. This subunit is involved in the RNA recognition step of the polyadenylation reaction. The sequence is that of Probable cleavage and polyadenylation specificity factor subunit 1 (cpsf-1) from Caenorhabditis elegans.